We begin with the raw amino-acid sequence, 81 residues long: NADH-ubiquinone oxidoreductase chain 6 (81 aa).

The next 3 helical transmembrane spans lie at 1 to 21, 27 to 47, and 48 to 68; these read MTYF…GVAS, YGVV…LSLG, and VSFV…VVFV.

This sequence belongs to the complex I subunit 6 family.

The protein localises to the mitochondrion membrane. It catalyses the reaction a ubiquinone + NADH + 5 H(+)(in) = a ubiquinol + NAD(+) + 4 H(+)(out). Core subunit of the mitochondrial membrane respiratory chain NADH dehydrogenase (Complex I) that is believed to belong to the minimal assembly required for catalysis. Complex I functions in the transfer of electrons from NADH to the respiratory chain. The immediate electron acceptor for the enzyme is believed to be ubiquinone. This chain is NADH-ubiquinone oxidoreductase chain 6 (MT-ND6), found in Anas platyrhynchos (Mallard).